The primary structure comprises 67 residues: MARITVEDCLEHIPNRFQLVLAATYRARMLSQGHAPKIESRNKPAVTALREIAEGKIGLEMLKKVPG.

The protein belongs to the RNA polymerase subunit omega family. The RNAP catalytic core consists of 2 alpha, 1 beta, 1 beta' and 1 omega subunit. When a sigma factor is associated with the core the holoenzyme is formed, which can initiate transcription.

The catalysed reaction is RNA(n) + a ribonucleoside 5'-triphosphate = RNA(n+1) + diphosphate. Functionally, promotes RNA polymerase assembly. Latches the N- and C-terminal regions of the beta' subunit thereby facilitating its interaction with the beta and alpha subunits. The polypeptide is DNA-directed RNA polymerase subunit omega (Paracidovorax citrulli (strain AAC00-1) (Acidovorax citrulli)).